The chain runs to 80 residues: Exodeoxyribonuclease 7 small subunit (80 aa).

The protein belongs to the XseB family. In terms of assembly, heterooligomer composed of large and small subunits.

It localises to the cytoplasm. It carries out the reaction Exonucleolytic cleavage in either 5'- to 3'- or 3'- to 5'-direction to yield nucleoside 5'-phosphates.. Its function is as follows. Bidirectionally degrades single-stranded DNA into large acid-insoluble oligonucleotides, which are then degraded further into small acid-soluble oligonucleotides. The protein is Exodeoxyribonuclease 7 small subunit of Vibrio atlanticus (strain LGP32) (Vibrio splendidus (strain Mel32)).